The following is a 342-amino-acid chain: D-alanine--D-alanine ligase (342 aa).

Residues 132–326 (KLYAKECGIE…VAKHLPKSKN (195 aa)) enclose the ATP-grasp domain. An ATP-binding site is contributed by 159–210 (EYPVIIKPNHLGSSIGVSVVYDSSELEYALDVAFEFDDEVLIEPFIEGIEEY). Mg(2+)-binding residues include D282, E294, and N296.

Belongs to the D-alanine--D-alanine ligase family. The cofactor is Mg(2+). Mn(2+) serves as cofactor.

The protein resides in the cytoplasm. The enzyme catalyses 2 D-alanine + ATP = D-alanyl-D-alanine + ADP + phosphate + H(+). The protein operates within cell wall biogenesis; peptidoglycan biosynthesis. Its function is as follows. Cell wall formation. The polypeptide is D-alanine--D-alanine ligase (Nitratiruptor sp. (strain SB155-2)).